Here is a 399-residue protein sequence, read N- to C-terminus: MNFKTENSTTPNGDWSQSKAFTNSGSSFPVLNGTCELDQENLALSNSGQPESIFTQDSGLHGIDVAAPSDITDLNNQSGYQYNNNLAHDLYFTGSMEMPTTQHPYITNTNNHLSYSNSSEEFSPIGNNMSPDSTGGANSNNFTSGNKRKASNESFSPLSGHHYGTESGNNNNNNGTSRSSQSSSHKSRKKLLDEKDAALIARDDSELTEEELQMKRKAQNRAAQRAFRERKESKLKELEAKLLASEEERQKLLDELEQIKKQNISIATENEILKHNGMGNINNDVQIGNLSSYGRLQVDKFNFPKTQKDFIEHVLQGTNHQLKDENKDKVYNDNQGHKLLALGAVWDYLQIKAEEADLDFNSIDFNDVMEKLKGNEKCHGYGPAYPLELVNEAIESSLN.

Disordered stretches follow at residues 1–21 and 103–197; these read MNFKTENSTTPNGDWSQSKAF and HPYI…EKDA. Residues 103–145 are compositionally biased toward polar residues; it reads HPYITNTNNHLSYSNSSEEFSPIGNNMSPDSTGGANSNNFTSG. Positions 167 to 184 are enriched in low complexity; sequence SGNNNNNNGTSRSSQSSS. The region spanning 210-273 is the bZIP domain; the sequence is EELQMKRKAQ…ISIATENEIL (64 aa). Residues 215 to 234 are basic motif; the sequence is KRKAQNRAAQRAFRERKESK. The segment at 235–242 is leucine-zipper; it reads LKELEAKL.

Belongs to the bZIP family.

The protein resides in the nucleus. Transcription factor that confers fluconazole resistance in S.cerevisiae by activation of the PDR5 gene. Can also activate the transcription of S.cerevisiae genes involved in 4-nitroquinoline-N-oxide resistance. The sequence is that of Fluconazole resistance protein 3 (FCR3) from Candida albicans (Yeast).